Consider the following 306-residue polypeptide: Putative beta-lactamase HcpD (306 aa).

Positions 1–25 (MIKSWTKKWFLILFLMASCSSYLVA) are cleaved as a signal peptide. TPR repeat units follow at residues 28–61 (GEKY…RVGV), 96–133 (HLAC…KGGV), 168–205 (GISC…KDGA), and 240–277 (GSGC…GFSG). Disulfide bonds link C55-C63, C91-C99, C127-C135, C163-C171, C199-C207, C235-C243, and C271-C279.

Belongs to the hcp beta-lactamase family.

The protein resides in the secreted. It catalyses the reaction a beta-lactam + H2O = a substituted beta-amino acid. In terms of biological role, may hydrolyze 6-aminopenicillinic acid and 7-aminocephalosporanic acid (ACA) derivatives. Binds to penicillin. This Helicobacter pylori (strain ATCC 700392 / 26695) (Campylobacter pylori) protein is Putative beta-lactamase HcpD (hcpD).